Here is a 116-residue protein sequence, read N- to C-terminus: Hydrogenase maturation factor HypA (116 aa).

Ni(2+) is bound at residue His2. Zn(2+)-binding residues include Cys73, Cys76, Cys90, and Cys93.

Belongs to the HypA/HybF family.

In terms of biological role, involved in the maturation of [NiFe] hydrogenases. Required for nickel insertion into the metal center of the hydrogenase. The protein is Hydrogenase maturation factor HypA of Escherichia coli O157:H7.